A 198-amino-acid polypeptide reads, in one-letter code: Probable GTP-binding protein EngB (198 aa).

Positions Gly-22 to Leu-195 constitute an EngB-type G domain. GTP contacts are provided by residues Gly-30 to Ser-37, Gly-57 to Thr-61, Asp-75 to Gly-78, Thr-142 to Asp-145, and Phe-174 to Ala-176. Residues Ser-37 and Thr-59 each coordinate Mg(2+).

This sequence belongs to the TRAFAC class TrmE-Era-EngA-EngB-Septin-like GTPase superfamily. EngB GTPase family. The cofactor is Mg(2+).

In terms of biological role, necessary for normal cell division and for the maintenance of normal septation. This is Probable GTP-binding protein EngB from Lacticaseibacillus paracasei (strain ATCC 334 / BCRC 17002 / CCUG 31169 / CIP 107868 / KCTC 3260 / NRRL B-441) (Lactobacillus paracasei).